We begin with the raw amino-acid sequence, 665 residues long: Phosphatidylinositol-3-phosphate phosphatase MTMR1 (665 aa).

M1 carries the N-acetylmethionine modification. Over residues 1-11 the composition is skewed to low complexity; sequence MDRPAAAAAAG. Positions 1-51 are disordered; sequence MDRPAAAAAAGCEGGGGPNPGPAGGRRPPRAAGGATAGSRQPSVETLDSPT. Positions 12 to 24 are enriched in gly residues; that stretch reads CEGGGGPNPGPAG. Positions 39-51 are enriched in polar residues; that stretch reads SRQPSVETLDSPT. A phosphoserine mark is found at S43 and S49. The GRAM domain occupies 90-161; that stretch reads NKLAQMEEAP…GVISRVEKIG (72 aa). Positions 226–601 constitute a Myotubularin phosphatase domain; the sequence is GWKVYDPVSE…SHLELWVNYY (376 aa). N351, N376, and I377 together coordinate a 1,2-diacyl-sn-glycero-3-phospho-(1D-myo-inositol-3-phosphate). C438 (phosphocysteine intermediate) is an active-site residue. A 1,2-diacyl-sn-glycero-3-phospho-(1D-myo-inositol-3-phosphate) contacts are provided by S439, D440, G441, W442, D443, R444, and R484. S439 is a phosphate binding site. The phosphate site is built by G441, W442, D443, and R444. Residues 608–665 form a required for dimerization region; it reads MRPQMPIHQNLKELLAVRAELQKRVEGLQREVATRAVSSSSERGSSPSHSATSVHTSV. A disordered region spans residues 642–665; it reads RAVSSSSERGSSPSHSATSVHTSV. The segment covering 645 to 657 has biased composition (low complexity); the sequence is SSSSERGSSPSHS.

This sequence belongs to the protein-tyrosine phosphatase family. Non-receptor class myotubularin subfamily. As to quaternary structure, homodimer.

The protein localises to the cell membrane. The protein resides in the cytoplasm. The enzyme catalyses a 1,2-diacyl-sn-glycero-3-phospho-(1D-myo-inositol-3-phosphate) + H2O = a 1,2-diacyl-sn-glycero-3-phospho-(1D-myo-inositol) + phosphate. It carries out the reaction 1,2-dioctanoyl-sn-glycero-3-phospho-(1-D-myo-inositol-3-phosphate) + H2O = 1,2-dioctanoyl-sn-glycero-3-phospho-(1D-myo-inositol) + phosphate. The catalysed reaction is a 1,2-diacyl-sn-glycero-3-phospho-(1D-myo-inositol-3,5-bisphosphate) + H2O = a 1,2-diacyl-sn-glycero-3-phospho-(1D-myo-inositol-5-phosphate) + phosphate. Lipid phosphatase that specifically dephosphorylates the D-3 position of phosphatidylinositol 3-phosphate, generating phosphatidylinositol. Could also dephosphorylate phosphatidylinositol 3,5-bisphosphate to produce phosphatidylinositol 5-phosphate. The polypeptide is Phosphatidylinositol-3-phosphate phosphatase MTMR1 (Homo sapiens (Human)).